The primary structure comprises 122 residues: Large ribosomal subunit protein uL14 (122 aa).

This sequence belongs to the universal ribosomal protein uL14 family. As to quaternary structure, part of the 50S ribosomal subunit. Forms a cluster with proteins L3 and L19. In the 70S ribosome, L14 and L19 interact and together make contacts with the 16S rRNA in bridges B5 and B8.

In terms of biological role, binds to 23S rRNA. Forms part of two intersubunit bridges in the 70S ribosome. In Parafrankia sp. (strain EAN1pec), this protein is Large ribosomal subunit protein uL14.